A 331-amino-acid polypeptide reads, in one-letter code: Phenylalanine--tRNA ligase alpha subunit (331 aa).

E258 provides a ligand contact to Mg(2+).

The protein belongs to the class-II aminoacyl-tRNA synthetase family. Phe-tRNA synthetase alpha subunit type 1 subfamily. Tetramer of two alpha and two beta subunits. The cofactor is Mg(2+).

The protein localises to the cytoplasm. The catalysed reaction is tRNA(Phe) + L-phenylalanine + ATP = L-phenylalanyl-tRNA(Phe) + AMP + diphosphate + H(+). This chain is Phenylalanine--tRNA ligase alpha subunit (pheS), found in Synechocystis sp. (strain ATCC 27184 / PCC 6803 / Kazusa).